The following is a 212-amino-acid chain: Orotate phosphoribosyltransferase (212 aa).

5-phospho-alpha-D-ribose 1-diphosphate-binding positions include arginine 95, lysine 99, histidine 101, and 121–129 (DDLITTGGS). Orotate is bound at residue threonine 125.

The protein belongs to the purine/pyrimidine phosphoribosyltransferase family. PyrE subfamily. Homodimer. Requires Mg(2+) as cofactor.

It carries out the reaction orotidine 5'-phosphate + diphosphate = orotate + 5-phospho-alpha-D-ribose 1-diphosphate. The protein operates within pyrimidine metabolism; UMP biosynthesis via de novo pathway; UMP from orotate: step 1/2. In terms of biological role, catalyzes the transfer of a ribosyl phosphate group from 5-phosphoribose 1-diphosphate to orotate, leading to the formation of orotidine monophosphate (OMP). The polypeptide is Orotate phosphoribosyltransferase (Lactobacillus johnsonii (strain CNCM I-12250 / La1 / NCC 533)).